We begin with the raw amino-acid sequence, 380 residues long: RNA-binding motif protein, Y chromosome (380 aa).

Residues 8 to 86 (GKIFIGGLNI…KRIKVKQARR (79 aa)) enclose the RRM domain. Disordered regions lie at residues 82-226 (KQAR…STSR) and 279-358 (HEAP…YSAS). Residues 166 to 178 (RSATSAQTRSNTG) are compositionally biased toward polar residues. Basic and acidic residues-rich tracts occupy residues 180–190 (RGREPHRREIS) and 333–351 (IDRE…HSPK).

In terms of assembly, interacts with SRSF3/SRP20, SRSF9/SRP30, SRSF5/SRP40, and SRSF6/SRP55; this interaction inhibits SRSF family member pre-mRNA splicing. Interacts with splicing factor proteins and KHDRBS3. In terms of tissue distribution, testis-specific.

It is found in the nucleus. Its function is as follows. RNA-binding protein involved in pre-mRNA splicing. Required for sperm development. Acts additively with TRA2B to promote exon 7 inclusion of the survival motor neuron SMN. Binds non-specifically to mRNAs. The sequence is that of RNA-binding motif protein, Y chromosome from Mus musculus (Mouse).